Reading from the N-terminus, the 198-residue chain is Cyclin-dependent kinase inhibitor 1B (198 aa).

A compositionally biased stretch (polar residues) spans 1-11; the sequence is MSNVRVSNGSP. Residues 1 to 22 are disordered; that stretch reads MSNVRVSNGSPSLERMDARQAE. Position 10 is a phosphoserine; by UHMK1 (S10). Residues 51 to 91 form an interaction with CDK2 region; sequence DMEEASQRKWNFDFQNHKPLEGKYEWQEVEKGSLPEFYYRP. A Phosphotyrosine; by SRC modification is found at Y74. The tract at residues 87 to 198 is disordered; it reads FYYRPPRPPK…KKPGLRRRQT (112 aa). Y88 is modified (phosphotyrosine; by ABL, LYN and SRC). Y89 bears the Phosphotyrosine mark. The segment covering 104 to 113 has biased composition (polar residues); it reads QESQDVSGNR. Residues 126–137 are compositionally biased toward basic and acidic residues; sequence EDTHLVDQKTDT. The short motif at 153–169 is the Nuclear localization signal element; sequence KRPATDDSSPQNKRANR. T157 bears the Phosphothreonine; by CaMK1, PKB/AKT1 and PIM1 mark. Residue T170 is modified to Phosphothreonine. The segment covering 175-186 has biased composition (polar residues); sequence SDGSPNAGSVEQ. T187 bears the Phosphothreonine; by PKB/AKT1, CDK1 and CDK2 mark. A Phosphothreonine; by CaMK1, PKB/AKT1, RPS6KA1, RPS6KA3 and PIM1 modification is found at T198.

The protein belongs to the CDI family. Forms a ternary complex composed of CCNE1, CDK2 and CDKN1B. Interacts directly with CCNE1; the interaction is inhibited by CDK2-dependent phosphorylation on Thr-187. Interacts with COPS5, subunit of the COP9 signalosome complex; the interaction leads to CDKN1B degradation. Interacts with NUP50; the interaction leads to nuclear import and degradation of phosphorylated CDKN1B. Interacts with CCND1 and SNX6. Interacts (Thr-198-phosphorylated form) with 14-3-3 proteins, binds strongly YWHAQ, weakly YWHAE and YWHAH, but not YWHAB nor YWHAZ; the interaction with YWHAQ results in translocation to the cytoplasm. Interacts with AKT1 and LYN; the interactions lead to cytoplasmic mislocation, phosphorylation of CDKN1B and inhibition of cell cycle arrest. Forms a ternary complex with CCNA2 and CDK2; CDKN1B inhibits the kinase activity of CDK2 through conformational rearrangements. Interacts (unphosphorylated form) with CDK2. Forms a complex with CDK2 and SPDYA, but does not directly interact with SPDYA. Forms a ternary complex composed of cyclin D, CDK4 and CDKN1B. Interacts (phosphorylated on Tyr-88 and Tyr-89) with CDK4; the interaction is required for cyclin D and CDK4 complex assembly, induces nuclear translocation and activates the CDK4 kinase activity. Interacts with GRB2. Interacts with PIM1. Identified in a complex with SKP1, SKP2 and CKS1B. Interacts with UHMK1; the interaction leads to cytoplasmic mislocation, phosphorylation of CDKN1B and inhibition of cell cycle arrest. Also interacts with CDK1. Dephosphorylated on Thr-187 by PPM1H, leading to CDKN1B stability. In terms of processing, phosphorylated; phosphorylation occurs on serine, threonine and tyrosine residues. Phosphorylation on Ser-10 is the major site of phosphorylation in resting cells, takes place at the G(0)-G(1) phase and leads to protein stability. Phosphorylation on other sites is greatly enhanced by mitogens, growth factors, cMYC and in certain cancer cell lines. The phosphorylated form found in the cytoplasm is inactivate. Phosphorylation on Thr-198 is required for interaction with 14-3-3 proteins. Phosphorylation on Thr-187, by CDK1 and CDK2 leads to protein ubiquitination and proteasomal degradation. Tyrosine phosphorylation promotes this process. Phosphorylation by PKB/AKT1 can be suppressed by LY294002, an inhibitor of the catalytic subunit of PI3K. Phosphorylation on Tyr-88 and Tyr-89 has no effect on binding CDK2, but is required for binding CDK4. Dephosphorylated on tyrosine residues by G-CSF. Dephosphorylated on Thr-187 by PPM1H, leading to CDKN1B stability. Post-translationally, ubiquitinated; in the cytoplasm by the KPC complex (composed of RNF123/KPC1 and UBAC1/KPC2) and, in the nucleus, by SCF(SKP2). The latter requires prior phosphorylation on Thr-187. Ubiquitinated; by a TRIM21-containing SCF(SKP2)-like complex; leads to its degradation. Subject to degradation in the lysosome. Interaction with SNX6 promotes lysosomal degradation.

The protein localises to the nucleus. Its subcellular location is the cytoplasm. The protein resides in the endosome. Functionally, important regulator of cell cycle progression. Inhibits the kinase activity of CDK2 bound to cyclin A, but has little inhibitory activity on CDK2 bound to SPDYA. Involved in G1 arrest. Potent inhibitor of cyclin E- and cyclin A-CDK2 complexes. Forms a complex with cyclin type D-CDK4 complexes and is involved in the assembly, stability, and modulation of CCND1-CDK4 complex activation. Acts either as an inhibitor or an activator of cyclin type D-CDK4 complexes depending on its phosphorylation state and/or stoichometry. The polypeptide is Cyclin-dependent kinase inhibitor 1B (CDKN1B) (Felis catus (Cat)).